A 633-amino-acid chain; its full sequence is Threonine--tRNA ligase (633 aa).

Residues Met-1–Gln-59 enclose the TGS domain. The tract at residues Asp-240–Pro-532 is catalytic. Positions 332, 383, and 509 each coordinate Zn(2+).

This sequence belongs to the class-II aminoacyl-tRNA synthetase family. As to quaternary structure, homodimer. The cofactor is Zn(2+).

It localises to the cytoplasm. The catalysed reaction is tRNA(Thr) + L-threonine + ATP = L-threonyl-tRNA(Thr) + AMP + diphosphate + H(+). Catalyzes the attachment of threonine to tRNA(Thr) in a two-step reaction: L-threonine is first activated by ATP to form Thr-AMP and then transferred to the acceptor end of tRNA(Thr). Also edits incorrectly charged L-seryl-tRNA(Thr). In Wolbachia pipientis subsp. Culex pipiens (strain wPip), this protein is Threonine--tRNA ligase.